The chain runs to 215 residues: Vesicle-trafficking protein SEC22b (215 aa).

The Cytoplasmic portion of the chain corresponds to 2–194 (VLLTMIARVA…KYLNMRSTYA (193 aa)). The region spanning 6–119 (MIARVADGLP…YSFIEFDTFI (114 aa)) is the Longin domain. Residue K38 is modified to N6-acetyllysine. In terms of domain architecture, v-SNARE coiled-coil homology spans 134–194 (NLGSINTELQ…KYLNMRSTYA (61 aa)). Position 137 is a phosphoserine (S137). T140 is modified (phosphothreonine). Phosphoserine occurs at positions 164, 168, 174, and 177. A helical; Anchor for type IV membrane protein transmembrane segment spans residues 195–215 (KLAAVAVFFIMLIVYVRFWWL).

This sequence belongs to the synaptobrevin family. As to quaternary structure, interacts with STX17. Component of two distinct SNARE complexes consisting of STX5, GOSR2/BOS1, BET1 and SEC22B or STX18, USE1L, BNIP1/SEC20L and SEC22B. YKT6 can probably replace SEC22B in either complex. Interacts with the COPII Sec23/24 complex composed of SEC23A and SEC24A; recruits SEC22B into COPII-coated vesicles to allow its transport from the endoplasmic reticulum to the Golgi. Interacts with BET1.

Its subcellular location is the endoplasmic reticulum membrane. The protein resides in the endoplasmic reticulum-Golgi intermediate compartment membrane. The protein localises to the golgi apparatus. It is found in the cis-Golgi network membrane. It localises to the trans-Golgi network membrane. Its subcellular location is the melanosome. Its function is as follows. SNARE involved in targeting and fusion of ER-derived transport vesicles with the Golgi complex as well as Golgi-derived retrograde transport vesicles with the ER. In Homo sapiens (Human), this protein is Vesicle-trafficking protein SEC22b (SEC22B).